A 157-amino-acid chain; its full sequence is Transcription factor HES-2 (157 aa).

The bHLH domain maps to 13 to 70 (LRKSLKPLLEKRRRARINESLSQLKGLVLPLLGAETSRYSKLEKADILEMTVRFLREQ). The region spanning 86–119 (YLEGYRACLARLARVLPACSVLEPAVSARLLEHL) is the Orange domain. The tract at residues 124–157 (VSGGPPSLTPASASAPAPSPPVPPPSSLGLWRPW) is disordered. Low complexity predominate over residues 125–139 (SGGPPSLTPASASAP). The span at 140 to 149 (APSPPVPPPS) shows a compositional bias: pro residues. The short motif at 154-157 (WRPW) is the WRPW motif element.

Transcription repression requires formation of a complex with a corepressor protein of the Groucho/TLE family.

The protein localises to the nucleus. Functionally, transcriptional repressor of genes that require a bHLH protein for their transcription. The protein is Transcription factor HES-2 (Hes2) of Rattus norvegicus (Rat).